The chain runs to 562 residues: MNNDKRPLYIPYAGPALMATPLLNKGSAFSAEERSSFNLEGLLPETTETIQEQVERAYQQYKSFESDMDKHIYLRNIQDTNETLFYRLVQNHISEMMPIIYTPTVGAACENFSNIYRRGRGLFISYPNRDRIDDLLNNAANHNVKVIVVTDGERILGLGDQGIGGMGIPIGKLSLYTACGGISPAYTLPIVLDVGTNNPQRLADPMYMGWRHPRITGPDYDAFVEEFIQAVQRRWPDALIQFEDFAQKNAMPLLERYKDRICCFNDDIQGTAAVTVGSLLAACKAAGTQLSKQRITFLGAGSAGCGIAEAIIAQMVSEGISDEKARSQVYMVDRWGLLQEGMPNLLDFQQRLVQKHSNTKEWENEGNGFSLLDVMRNAKPTVLIGVSGAPGLFSQEVIEEMHKHCKRPIVFPLSNPTSRVEATPNDIIRWTNGEALVATGSPFDPVVHEGRTYPIAQCNNSYIFPGIGLGVLAVNAKRVTDEMLMESSRALATCSPLAINGRGALLPPLEEIHLVSKKIAFAVAKKAIEQGVALEITDEALNDAIDQAFWQPVYRRYKRTAF.

Tyrosine 101 acts as the Proton donor in catalysis. Residue arginine 154 participates in NAD(+) binding. The active-site Proton acceptor is lysine 172. Glutamate 243, aspartate 244, and aspartate 267 together coordinate a divalent metal cation. Aspartate 267 and asparagine 415 together coordinate NAD(+).

The protein belongs to the malic enzymes family. Homotetramer. Mg(2+) serves as cofactor. It depends on Mn(2+) as a cofactor.

It carries out the reaction (S)-malate + NAD(+) = pyruvate + CO2 + NADH. The enzyme catalyses oxaloacetate + H(+) = pyruvate + CO2. In Vibrio parahaemolyticus serotype O3:K6 (strain RIMD 2210633), this protein is NAD-dependent malic enzyme.